Reading from the N-terminus, the 83-residue chain is uncharacterized protein (83 aa).

It localises to the plastid. The protein resides in the chloroplast. This is an uncharacterized protein from Pinus thunbergii (Japanese black pine).